A 229-amino-acid chain; its full sequence is Non-structural protein P8 (229 aa).

2 helical membrane passes run 119–139 and 162–182; these read IIHM…VCTL and SLNP…MVCA.

The protein belongs to the orbivirus NS3 family. Forms homooligomers via coiled-coil motif. Interacts with host OPTN; this interaction inhibits innate immune response.

Its subcellular location is the host cell membrane. The protein resides in the host Golgi apparatus. In terms of biological role, plays a role in the inhibition of host innate immune response. Interacts with host OPTN and thus inhibits the recruitment of TBK1 to the host Golgi apparatus. In turn, downstream partner IRF3 cannot be activated and IFN-beta production is impaired. Its function is as follows. Facilitates viral particle release either by increasing plasma membrane permeability through a viroporin-like activity or by viral budding. The polypeptide is Non-structural protein P8 (Segment-10) (Antilocapra americana (Pronghorn)).